A 310-amino-acid polypeptide reads, in one-letter code: tRNA pseudouridine synthase B (310 aa).

The active-site Nucleophile is the aspartate 49.

It belongs to the pseudouridine synthase TruB family. Type 1 subfamily.

It carries out the reaction uridine(55) in tRNA = pseudouridine(55) in tRNA. Functionally, responsible for synthesis of pseudouridine from uracil-55 in the psi GC loop of transfer RNAs. This Idiomarina loihiensis (strain ATCC BAA-735 / DSM 15497 / L2-TR) protein is tRNA pseudouridine synthase B.